An 862-amino-acid polypeptide reads, in one-letter code: Leucine--tRNA ligase (862 aa).

The short motif at 42-52 is the 'HIGH' region element; that stretch reads PYPSGKIHIGH. Residues 614 to 618 carry the 'KMSKS' region motif; that stretch reads KMSKS. Position 617 (K617) interacts with ATP.

It belongs to the class-I aminoacyl-tRNA synthetase family.

It localises to the cytoplasm. It carries out the reaction tRNA(Leu) + L-leucine + ATP = L-leucyl-tRNA(Leu) + AMP + diphosphate. This chain is Leucine--tRNA ligase, found in Syntrophus aciditrophicus (strain SB).